The chain runs to 263 residues: UDP-N-acetylenolpyruvoylglucosamine reductase (263 aa).

R146 is an active-site residue. Residue S188 is the Proton donor of the active site. E258 is an active-site residue.

This sequence belongs to the MurB family. It depends on FAD as a cofactor.

The protein localises to the cytoplasm. The catalysed reaction is UDP-N-acetyl-alpha-D-muramate + NADP(+) = UDP-N-acetyl-3-O-(1-carboxyvinyl)-alpha-D-glucosamine + NADPH + H(+). Its pathway is cell wall biogenesis; peptidoglycan biosynthesis. Functionally, cell wall formation. This is UDP-N-acetylenolpyruvoylglucosamine reductase from Helicobacter hepaticus (strain ATCC 51449 / 3B1).